The sequence spans 405 residues: uncharacterized protein (405 aa).

Transmembrane regions (helical) follow at residues 19–39 (IVSIVMFNFASYLTIGLPLAV), 48–68 (MGFSAFWAGLIISLQYFATLL), 85–105 (IVVFGLCGCFLSGLGYLLADI), 106–126 (ASAWPMISLLLLGLGRVILGI), 129–149 (SFAGTGSTLWGVGVVGSLHIG), 156–176 (GIVTYGAMAMGAPLGVLCYAW), 178–198 (GLQGLALTVMGVALLAVLLAL), 224–244 (GMALALASAGFGVIATFITLF), 252–272 (GAAFALTLFSVAFVGTRLLFP), 283–303 (VAMICFGVEIIGLLLVGTAAM), 309–329 (IGVLLTGMGFSLVFPALGVVA), 344–364 (TYTVFMDMSLGVTGPLAGLVM), and 366–386 (WAGVPVIYLAAAGLVAMALLL).

Belongs to the major facilitator superfamily. YhhS family.

It localises to the cell inner membrane. This is an uncharacterized protein from Salmonella enteritidis PT4 (strain P125109).